The sequence spans 361 residues: Mannose-1-phosphate guanylyltransferase 1 (361 aa).

Residues Leu-6 and Val-7 each coordinate GDP-alpha-D-mannose. Residues Gly-9, Gly-11, Thr-12, Arg-13, and Lys-23 each coordinate diphosphate. The GDP-alpha-D-mannose site is built by Gly-85, Asn-109, Asp-111, Gly-146, and Asn-173.

It belongs to the transferase hexapeptide repeat family. In terms of assembly, interacts in vitro with CSN5A and CSN5B, but in planta only with CSN5B, which targets CYT1 for degradation in the dark by the 26S proteasome. Forms homodimers in the unliganded structure. The product-bound structure is composed of six dimers that form a dodecameric assembly.

The protein resides in the cytoplasm. Its subcellular location is the nucleus. The enzyme catalyses alpha-D-mannose 1-phosphate + GTP + H(+) = GDP-alpha-D-mannose + diphosphate. It participates in nucleotide-sugar biosynthesis; GDP-alpha-D-mannose biosynthesis; GDP-alpha-D-mannose from alpha-D-mannose 1-phosphate (GTP route): step 1/1. Functionally, essential protein during embryogenesis. Catalyzes a reaction of the Smirnoff-Wheeler pathway, the major route to ascorbate biosynthesis in plants. Plays an essential role in plant growth and development and cell-wall architecture. Provides GDP-mannose, used for cell wall carbohydrate biosynthesis, protein N-glycosylation, as well as for the biosynthesis of the antioxidant ascorbate. This is Mannose-1-phosphate guanylyltransferase 1 from Arabidopsis thaliana (Mouse-ear cress).